The following is a 204-amino-acid chain: Thioredoxin-like 4, chloroplastic (204 aa).

The transit peptide at 1–27 (MSSLLNISHCSYHGYSGLTSRGGINTV) directs the protein to the chloroplast. The 139-residue stretch at 63-201 (AKSLSQENLV…IDAAILKYTS (139 aa)) folds into the Thioredoxin domain. Active-site nucleophile residues include C119 and C122. Residues C119 and C122 are joined by a disulfide bond.

The protein belongs to the thioredoxin family.

The protein resides in the plastid. The protein localises to the chloroplast. Functionally, probable thiol-disulfide oxidoreductase that may participate in various redox reactions. The polypeptide is Thioredoxin-like 4, chloroplastic (Arabidopsis thaliana (Mouse-ear cress)).